The following is a 167-amino-acid chain: Mitochondrial fission 1 protein B (167 aa).

One copy of the TPR repeat lies at 92-125; it reads REKLYLLALGYYRSGDFSRSRDCIERCLEVEPES. Residues 144-164 form a helical membrane-spanning segment; that stretch reads VIGVGIAVTAVGVVAGIAAAI.

It belongs to the FIS1 family. As to quaternary structure, interacts with PEX11A, PEX11B, PEX11C, PEX11D and PEX11E.

It localises to the mitochondrion outer membrane. Its subcellular location is the peroxisome membrane. Component of the peroxisomal and mitochondrial division machineries. Plays a role in promoting the fission of mitochondria and peroxisomes. In association with PEX11C, PEX11D, PEX11E and DRP3A, is involved in cell cycle-associated constitutive self-replication of preexisting peroxisomes. This chain is Mitochondrial fission 1 protein B (FIS1B), found in Arabidopsis thaliana (Mouse-ear cress).